Here is a 75-residue protein sequence, read N- to C-terminus: UPF0235 protein Mflv_3569 (75 aa).

The protein belongs to the UPF0235 family.

This Mycolicibacterium gilvum (strain PYR-GCK) (Mycobacterium gilvum (strain PYR-GCK)) protein is UPF0235 protein Mflv_3569.